Reading from the N-terminus, the 107-residue chain is MTLEKTNRMNYLIDFYQALLTPKQRNYMSLYYLDDYSLGEIAEEFEVSRQAVYDNIKRTETMLEQYEEKLALFEKFEQRQQLLQTLKRQVELTDDVSATISALENLE.

The protein belongs to the UPF0122 family.

Might take part in the signal recognition particle (SRP) pathway. This is inferred from the conservation of its genetic proximity to ftsY/ffh. May be a regulatory protein. This chain is UPF0122 protein EAT1b_2891, found in Exiguobacterium sp. (strain ATCC BAA-1283 / AT1b).